A 150-amino-acid chain; its full sequence is Sulfur-rich protein, serovars L1/L3 (150 aa).

Positions 1–20 are disordered; it reads MSTVPVVQGAGSSNSAQDIS. The next 2 helical transmembrane spans lie at 43-63 and 69-89; these read VGLV…VSAA and IYLA…ILSM.

The protein resides in the membrane. The protein is Sulfur-rich protein, serovars L1/L3 (srp) of Chlamydia trachomatis.